The primary structure comprises 883 residues: Valine--tRNA ligase (883 aa).

The short motif at 50 to 60 is the 'HIGH' region element; that stretch reads PNVTGKLHMGH. A 'KMSKS' region motif is present at residues 527–531; sequence KMSKS. Lysine 530 is a binding site for ATP. Residues 811 to 883 are a coiled coil; that stretch reads LNELIDLDEE…KQRLEQLQRA (73 aa). A disordered region spans residues 859–883; that stretch reads QRTKRSDFEDQLTSTKQRLEQLQRA.

Belongs to the class-I aminoacyl-tRNA synthetase family. ValS type 1 subfamily. Monomer.

Its subcellular location is the cytoplasm. It carries out the reaction tRNA(Val) + L-valine + ATP = L-valyl-tRNA(Val) + AMP + diphosphate. Its function is as follows. Catalyzes the attachment of valine to tRNA(Val). As ValRS can inadvertently accommodate and process structurally similar amino acids such as threonine, to avoid such errors, it has a 'posttransfer' editing activity that hydrolyzes mischarged Thr-tRNA(Val) in a tRNA-dependent manner. This is Valine--tRNA ligase from Lacticaseibacillus casei (Lactobacillus casei).